The sequence spans 186 residues: Acireductone dioxygenase (186 aa).

4 residues coordinate Fe(2+): His103, His105, Glu109, and His147. 4 residues coordinate Ni(2+): His103, His105, Glu109, and His147.

It belongs to the acireductone dioxygenase (ARD) family. In terms of assembly, monomer. Fe(2+) serves as cofactor. Requires Ni(2+) as cofactor.

The catalysed reaction is 1,2-dihydroxy-5-(methylsulfanyl)pent-1-en-3-one + O2 = 3-(methylsulfanyl)propanoate + CO + formate + 2 H(+). It catalyses the reaction 1,2-dihydroxy-5-(methylsulfanyl)pent-1-en-3-one + O2 = 4-methylsulfanyl-2-oxobutanoate + formate + 2 H(+). It functions in the pathway amino-acid biosynthesis; L-methionine biosynthesis via salvage pathway; L-methionine from S-methyl-5-thio-alpha-D-ribose 1-phosphate: step 5/6. In terms of biological role, catalyzes 2 different reactions between oxygen and the acireductone 1,2-dihydroxy-3-keto-5-methylthiopentene (DHK-MTPene) depending upon the metal bound in the active site. Fe-containing acireductone dioxygenase (Fe-ARD) produces formate and 2-keto-4-methylthiobutyrate (KMTB), the alpha-ketoacid precursor of methionine in the methionine recycle pathway. Ni-containing acireductone dioxygenase (Ni-ARD) produces methylthiopropionate, carbon monoxide and formate, and does not lie on the methionine recycle pathway. The protein is Acireductone dioxygenase of Synechococcus sp. (strain CC9605).